The sequence spans 572 residues: Urease subunit alpha (572 aa).

A Urease domain is found at 134 to 572 (GGIDSHIHFI…LPMTQRYFLF (439 aa)). Residues histidine 139, histidine 141, and lysine 222 each coordinate Ni(2+). Position 222 is an N6-carboxylysine (lysine 222). Histidine 224 is a binding site for substrate. Ni(2+)-binding residues include histidine 251 and histidine 277. Histidine 325 acts as the Proton donor in catalysis. Aspartate 365 serves as a coordination point for Ni(2+).

This sequence belongs to the metallo-dependent hydrolases superfamily. Urease alpha subunit family. In terms of assembly, heterotrimer of UreA (gamma), UreB (beta) and UreC (alpha) subunits. Three heterotrimers associate to form the active enzyme. The cofactor is Ni cation. Carboxylation allows a single lysine to coordinate two nickel ions.

The protein resides in the cytoplasm. It catalyses the reaction urea + 2 H2O + H(+) = hydrogencarbonate + 2 NH4(+). Its pathway is nitrogen metabolism; urea degradation; CO(2) and NH(3) from urea (urease route): step 1/1. In Polaromonas sp. (strain JS666 / ATCC BAA-500), this protein is Urease subunit alpha.